The sequence spans 132 residues: Mite allergen Der p 5 (132 aa).

Immunodominant conformational IgE-binding epitope regions lie at residues 25 to 53 (DYQNEFDFLLMERIHEQIKKGELALFYLQ) and 102 to 132 (EQYNLEMAKKSGDILERDLKKEEARVKKIEV).

It belongs to the mite group 5 allergen family. In terms of assembly, monomer. Trimer of homodimers. Oligomerizes in a concentration-dependent manner.

The polypeptide is Mite allergen Der p 5 (DERP5) (Dermatophagoides pteronyssinus (European house dust mite)).